The chain runs to 170 residues: Alpha-crystallin A chain (170 aa).

Methionine 1 bears the N-acetylmethionine mark. The interval 1-63 is required for complex formation with BFSP1 and BFSP2; sequence MDVTIQQPWF…RTALDSGISE (63 aa). Glutamine 6 carries the post-translational modification Deamidated glutamine; partial. Serine 45 is modified (phosphoserine). Glutamine 50 bears the Deamidated glutamine; partial mark. One can recognise a sHSP domain in the interval 52-161; it reads LFRTALDSGI…SERPIPVSRE (110 aa). Residues lysine 70 and lysine 99 each carry the N6-acetyllysine modification. Histidine 100 serves as a coordination point for Zn(2+). Deamidated asparagine; partial is present on asparagine 101. The Zn(2+) site is built by glutamate 102, histidine 107, and histidine 151. The interval 144–170 is disordered; that stretch reads PKIVDPSHSERPIPVSREEKPSSAPSS. Basic and acidic residues predominate over residues 148–164; sequence DPSHSERPIPVSREEKP. O-linked (GlcNAc) serine glycosylation occurs at serine 159.

It belongs to the small heat shock protein (HSP20) family. In terms of assembly, heteromer composed of three CRYAA and one CRYAB subunits. Inter-subunit bridging via zinc ions enhances stability, which is crucial as there is no protein turn over in the lens. Can also form homodimers and homotetramers (dimers of dimers) which serve as the building blocks of homooligomers. Within homooligomers, the zinc-binding motif is created from residues of 3 different molecules. His-100 and Glu-102 from one molecule are ligands of the zinc ion, and His-107 and His-151 residues from additional molecules complete the site with tetrahedral coordination geometry. Part of a complex required for lens intermediate filament formation composed of BFSP1, BFSP2 and CRYAA. Post-translationally, acetylation at Lys-70 may increase chaperone activity. In terms of processing, undergoes age-dependent proteolytical cleavage at the C-terminus.

Its subcellular location is the cytoplasm. The protein resides in the nucleus. Functionally, contributes to the transparency and refractive index of the lens. Acts as a chaperone, preventing aggregation of various proteins under a wide range of stress conditions. Required for the correct formation of lens intermediate filaments as part of a complex composed of BFSP1, BFSP2 and CRYAA. The polypeptide is Alpha-crystallin A chain (CRYAA) (Bradypus variegatus (Brown-throated three-fingered sloth)).